The following is a 268-amino-acid chain: Mitochondrial distribution and morphology protein 12 (268 aa).

Residues 1 to 256 (MSFEINWQDL…WPSWINLDFN (256 aa)) form the SMP-LTD domain. The disordered stretch occupies residues 75 to 94 (LPKDKIPEESDSGCQSADGE).

This sequence belongs to the MDM12 family. Component of the ER-mitochondria encounter structure (ERMES) or MDM complex, composed of MMM1, MDM10, MDM12 and MDM34. An MMM1 homodimer associates with one molecule of MDM12 on each side in a pairwise head-to-tail manner, and the SMP-LTD domains of MMM1 and MDM12 generate a continuous hydrophobic tunnel for phospholipid trafficking.

It is found in the mitochondrion outer membrane. Its subcellular location is the endoplasmic reticulum membrane. In terms of biological role, component of the ERMES/MDM complex, which serves as a molecular tether to connect the endoplasmic reticulum (ER) and mitochondria. Components of this complex are involved in the control of mitochondrial shape and protein biogenesis, and function in nonvesicular lipid trafficking between the ER and mitochondria. MDM12 is required for the interaction of the ER-resident membrane protein MMM1 and the outer mitochondrial membrane-resident beta-barrel protein MDM10. The MDM12-MMM1 subcomplex functions in the major beta-barrel assembly pathway that is responsible for biogenesis of all mitochondrial outer membrane beta-barrel proteins, and acts in a late step after the SAM complex. The MDM10-MDM12-MMM1 subcomplex further acts in the TOM40-specific pathway after the action of the MDM12-MMM1 complex. Essential for establishing and maintaining the structure of mitochondria and maintenance of mtDNA nucleoids. This chain is Mitochondrial distribution and morphology protein 12, found in Lachancea thermotolerans (strain ATCC 56472 / CBS 6340 / NRRL Y-8284) (Yeast).